The sequence spans 104 residues: Large ribosomal subunit protein cL38 (104 aa).

A chloroplast-targeting transit peptide spans 1-39 (MASVSSIFGCGVSMAPNSSLRNKAIRTERRSACGGLLIE). The tract at residues 42-76 (SRPQKKSTAHHMKTRPRKSRLSDRNRKPTVYAPLP) is disordered. A compositionally biased stretch (basic residues) spans 44-60 (PQKKSTAHHMKTRPRKS).

It belongs to the chloroplast-specific ribosomal protein cL38 family. Part of the 50S ribosomal subunit.

It is found in the plastid. It localises to the chloroplast. The protein is Large ribosomal subunit protein cL38 (PSRP6) of Pisum sativum (Garden pea).